The sequence spans 352 residues: S-adenosylmethionine:tRNA ribosyltransferase-isomerase (352 aa).

It belongs to the QueA family. In terms of assembly, monomer.

It localises to the cytoplasm. The catalysed reaction is 7-aminomethyl-7-carbaguanosine(34) in tRNA + S-adenosyl-L-methionine = epoxyqueuosine(34) in tRNA + adenine + L-methionine + 2 H(+). It functions in the pathway tRNA modification; tRNA-queuosine biosynthesis. Transfers and isomerizes the ribose moiety from AdoMet to the 7-aminomethyl group of 7-deazaguanine (preQ1-tRNA) to give epoxyqueuosine (oQ-tRNA). The sequence is that of S-adenosylmethionine:tRNA ribosyltransferase-isomerase from Paraburkholderia phytofirmans (strain DSM 17436 / LMG 22146 / PsJN) (Burkholderia phytofirmans).